The primary structure comprises 115 residues: Ribonuclease P protein component (115 aa).

Belongs to the RnpA family. As to quaternary structure, consists of a catalytic RNA component (M1 or rnpB) and a protein subunit.

The enzyme catalyses Endonucleolytic cleavage of RNA, removing 5'-extranucleotides from tRNA precursor.. Functionally, RNaseP catalyzes the removal of the 5'-leader sequence from pre-tRNA to produce the mature 5'-terminus. It can also cleave other RNA substrates such as 4.5S RNA. The protein component plays an auxiliary but essential role in vivo by binding to the 5'-leader sequence and broadening the substrate specificity of the ribozyme. In Natranaerobius thermophilus (strain ATCC BAA-1301 / DSM 18059 / JW/NM-WN-LF), this protein is Ribonuclease P protein component.